The primary structure comprises 294 residues: C-type lectin domain family 4 member G (294 aa).

At 1-30 (MNTGEYNKLGSAIEEVSRGQLGRWECYKQR) the chain is on the cytoplasmic side. A helical; Signal-anchor for type II membrane protein transmembrane segment spans residues 31–51 (LFFLVLALLVATVLWALILST). Residues 52-294 (LLSSASSKLR…WICEKRSSCY (243 aa)) are Extracellular-facing. The N-linked (GlcNAc...) asparagine glycan is linked to Asn73. Residues 100-151 (AQLQTTLAEFKDIQAKLMEQESILKELQERVTQDLAKASRDRENIRSELFQA) adopt a coiled-coil conformation. Residues Asn159, Asn246, and Asn256 are each glycosylated (N-linked (GlcNAc...) asparagine). The C-type lectin domain occupies 172 to 287 (FQGSCYYFSE…CTNERDGWIC (116 aa)). Cys264 and Cys278 form a disulfide bridge.

The protein localises to the cell membrane. Binds mannose, N-acetylglucosamine (GlcNAc) and fucose, but not galactose, in a Ca(2+)-dependent manner. This Mus musculus (Mouse) protein is C-type lectin domain family 4 member G (Clec4g).